Reading from the N-terminus, the 473-residue chain is Ribulose bisphosphate carboxylase large chain 1 (473 aa).

Positions 116 and 166 each coordinate substrate. Lysine 168 (proton acceptor) is an active-site residue. Residue lysine 170 coordinates substrate. Mg(2+) is bound by residues lysine 194, aspartate 196, and glutamate 197. The residue at position 194 (lysine 194) is an N6-carboxylysine. The active-site Proton acceptor is histidine 287. The substrate site is built by arginine 288, histidine 320, and serine 372.

This sequence belongs to the RuBisCO large chain family. Type I subfamily. In terms of assembly, heterohexadecamer of 8 large chains and 8 small chains. The cofactor is Mg(2+).

The catalysed reaction is 2 (2R)-3-phosphoglycerate + 2 H(+) = D-ribulose 1,5-bisphosphate + CO2 + H2O. The enzyme catalyses D-ribulose 1,5-bisphosphate + O2 = 2-phosphoglycolate + (2R)-3-phosphoglycerate + 2 H(+). Its function is as follows. RuBisCO catalyzes two reactions: the carboxylation of D-ribulose 1,5-bisphosphate, the primary event in carbon dioxide fixation, as well as the oxidative fragmentation of the pentose substrate. Both reactions occur simultaneously and in competition at the same active site. In Acidithiobacillus ferrooxidans (Thiobacillus ferrooxidans), this protein is Ribulose bisphosphate carboxylase large chain 1.